Reading from the N-terminus, the 290-residue chain is Homeobox protein HMX3-B (290 aa).

Disordered stretches follow at residues 1–41 (MADS…GSSK) and 96–169 (EKVN…KKKT). A compositionally biased stretch (basic and acidic residues) spans 107–124 (LDRHTPDPPKSDQESKEE). Over residues 125-137 (SADDEIALEESDA) the composition is skewed to acidic residues. Over residues 138 to 162 (EEPKKETDQEDDWMRKGEDLESDKK) the composition is skewed to basic and acidic residues. Positions 166–225 (KKKTRTVFSRSQVFQLESTFDIKRYLSSSERAGLAASLHLTETQVKIWFQNRRNKWKRQL) form a DNA-binding region, homeobox.

The protein belongs to the HMX homeobox family. Expressed in the ear placode and vesicle and in cells forming the vestibulo-acoustic ganglion.

It localises to the nucleus. Functionally, transcription factor involved in specification of neuronal cell types and which is required for inner ear and hypothalamus development. Binds to the 5'-CAAGTG-3' core sequence. This is Homeobox protein HMX3-B (hmx3b) from Oryzias latipes (Japanese rice fish).